The chain runs to 417 residues: Gamma-glutamyl phosphate reductase (417 aa).

The protein belongs to the gamma-glutamyl phosphate reductase family.

Its subcellular location is the cytoplasm. The enzyme catalyses L-glutamate 5-semialdehyde + phosphate + NADP(+) = L-glutamyl 5-phosphate + NADPH + H(+). Its pathway is amino-acid biosynthesis; L-proline biosynthesis; L-glutamate 5-semialdehyde from L-glutamate: step 2/2. Its function is as follows. Catalyzes the NADPH-dependent reduction of L-glutamate 5-phosphate into L-glutamate 5-semialdehyde and phosphate. The product spontaneously undergoes cyclization to form 1-pyrroline-5-carboxylate. The chain is Gamma-glutamyl phosphate reductase from Escherichia coli (strain SMS-3-5 / SECEC).